Reading from the N-terminus, the 447-residue chain is Enolase (447 aa).

Position 168 (Q168) interacts with (2R)-2-phosphoglycerate. The Proton donor role is filled by E210. Mg(2+) contacts are provided by D247, E292, and D319. Residues K344, R373, S374, and K395 each contribute to the (2R)-2-phosphoglycerate site. The active-site Proton acceptor is the K344.

This sequence belongs to the enolase family. In terms of assembly, component of the RNA degradosome, a multiprotein complex involved in RNA processing and mRNA degradation. It depends on Mg(2+) as a cofactor.

Its subcellular location is the cytoplasm. It localises to the secreted. It is found in the cell surface. The enzyme catalyses (2R)-2-phosphoglycerate = phosphoenolpyruvate + H2O. It participates in carbohydrate degradation; glycolysis; pyruvate from D-glyceraldehyde 3-phosphate: step 4/5. In terms of biological role, catalyzes the reversible conversion of 2-phosphoglycerate (2-PG) into phosphoenolpyruvate (PEP). It is essential for the degradation of carbohydrates via glycolysis. This is Enolase from Blochmanniella floridana.